Here is a 280-residue protein sequence, read N- to C-terminus: Shikimate dehydrogenase (NADP(+)) (280 aa).

Shikimate contacts are provided by residues 20–22 (SLS) and Thr-67. Residue Lys-71 is the Proton acceptor of the active site. 2 residues coordinate shikimate: Asn-92 and Asp-107. NADP(+) contacts are provided by residues 131–135 (GAGGA) and Gly-220. Position 222 (Tyr-222) interacts with shikimate. Gly-243 serves as a coordination point for NADP(+).

It belongs to the shikimate dehydrogenase family. As to quaternary structure, homodimer.

It catalyses the reaction shikimate + NADP(+) = 3-dehydroshikimate + NADPH + H(+). It functions in the pathway metabolic intermediate biosynthesis; chorismate biosynthesis; chorismate from D-erythrose 4-phosphate and phosphoenolpyruvate: step 4/7. Functionally, involved in the biosynthesis of the chorismate, which leads to the biosynthesis of aromatic amino acids. Catalyzes the reversible NADPH linked reduction of 3-dehydroshikimate (DHSA) to yield shikimate (SA). This Maricaulis maris (strain MCS10) (Caulobacter maris) protein is Shikimate dehydrogenase (NADP(+)).